The chain runs to 888 residues: Kinesin-like protein KIF20A (888 aa).

Serine 2 is subject to N-acetylserine. Serine 7, serine 14, and serine 21 each carry phosphoserine. The 444-residue stretch at 63-506 (KVKVYLRVRP…AKFSAIASQL (444 aa)) folds into the Kinesin motor domain. 159–166 (GVTNSGKT) lines the ATP pocket. Residue serine 527 is modified to Phosphoserine; by PLK1. Position 531 is a phosphoserine (serine 531). Coiled-coil stretches lie at residues 559 to 587 (KEELLQVVEAMKALLLKERQEKLRLEVQL) and 630 to 760 (ESLT…ERAC). A phosphoserine mark is found at serine 667, serine 683, and serine 823. Residues 761-888 (CHNTGAGKLR…LKSGPFGKKY (128 aa)) are globular. Residues 823 to 863 (STKKRLGANQENQQPNQQPPGKKPFLRNLLPRTPTCQSSTD) are disordered. Threonine 855 is modified (phosphothreonine). A phosphoserine mark is found at serine 865, serine 876, and serine 881.

Belongs to the TRAFAC class myosin-kinesin ATPase superfamily. Kinesin family. Phosphorylated by PLK1 at Ser-527 during mitosis, creating a docking site for PLK1 and recruiting PLK1 at central spindle.

It is found in the golgi apparatus. Its subcellular location is the cytoplasm. The protein resides in the cytoskeleton. The protein localises to the spindle. Its function is as follows. Mitotic kinesin required for chromosome passenger complex (CPC)-mediated cytokinesis. Following phosphorylation by PLK1, involved in recruitment of PLK1 to the central spindle. Interacts with guanosine triphosphate (GTP)-bound forms of RAB6A and RAB6B. May act as a motor required for the retrograde RAB6 regulated transport of Golgi membranes and associated vesicles along microtubules. Has a microtubule plus end-directed motility. The protein is Kinesin-like protein KIF20A (KIF20A) of Bos taurus (Bovine).